Reading from the N-terminus, the 147-residue chain is Cyanate hydratase (147 aa).

Catalysis depends on residues Arg88, Glu91, and Ser114.

The protein belongs to the cyanase family.

The enzyme catalyses cyanate + hydrogencarbonate + 3 H(+) = NH4(+) + 2 CO2. In terms of biological role, catalyzes the reaction of cyanate with bicarbonate to produce ammonia and carbon dioxide. This chain is Cyanate hydratase, found in Ralstonia pickettii (strain 12J).